A 143-amino-acid chain; its full sequence is Heat shock protein Hsp-16.48/Hsp-16.49 (143 aa).

The sHSP domain maps to 35–140; sequence HNSFNFSDNI…SSRSIPINFV (106 aa).

This sequence belongs to the small heat shock protein (HSP20) family.

This is Heat shock protein Hsp-16.48/Hsp-16.49 (hsp-16.48) from Caenorhabditis elegans.